Consider the following 876-residue polypeptide: Importin subunit beta-1 (876 aa).

M1 is modified (N-acetylmethionine). 5 HEAT repeats span residues 3-29 (LITI…ERAA), 32-62 (NLPT…LQIK), 85-120 (ANAR…ACAE), 129-160 (LIPQ…ICQD), and 170-201 (SNEI…LLNS). S12 carries the post-translational modification Phosphoserine. The 81-residue stretch at 21-101 (AQKFLERAAV…KNYVLQTLGT (81 aa)) folds into the Importin N-terminal domain. K211 carries the N6-acetyllysine modification. HEAT repeat units lie at residues 212 to 247 (ESER…IMSL), 260 to 302 (LFAI…EAAE), 314 to 359 (YAKG…STCC), 363 to 392 (IVPH…AFGS), 399 to 438 (PNQL…ICEL), 449 to 485 (LAPL…YEAA), 500 to 537 (SSSF…EIVK), 544 to 592 (YPAV…QNVL), 597 to 639 (HQDA…VEVL), 644 to 680 (LKYM…LCRA), 686 to 724 (LPFC…ALAI), 729 to 777 (KKYL…QGLK), 785 to 828 (PDVM…LCTA), and 834 to 875 (LKLV…LKNQ). An essential for high affinity interaction with RPL23A region spans residues 286–462 (VCDEEMDLAI…LQCLIEGLSA (177 aa)). Residues 329–342 (TLTKQDENDDDDDW) form an IAB-binding region. The ran-GTP binding stretch occupies residues 334 to 419 (DENDDDDDWN…MPTLIELMKD (86 aa)). N6-acetyllysine occurs at positions 835 and 867.

The protein belongs to the importin beta family. Importin beta-1 subfamily. In terms of assembly, forms a complex with an importin alpha subunit. Interacts with XPO1. Forms a heterodimer with IPO7. The KPNB1/IPO7 heterodimer interacts with H1 histone. Interacts with SNUPN. Interacts with H2A, H2B, H3 and H4 histones. Component of an import snRNP complex composed of KPNB1, SNUPN, SMN1 and ZNF259. Component of a nuclear export receptor complex composed of KPNB1, Ran, SNUPN and XPO1. Interacts with SRY. Interacts with PRKCI/atypical protein kinase C iota. Interacts with KPNA2. Interacts with KPNA7. Interacts with SNAI1 (via zinc fingers) and SNAI2 (via zinc fingers). Interacts with SLC35G1 and STIM1. Interacts with DCAF8. Interacts with RAN. Interacts with NUMA1 (via C-terminus); this interaction is inhibited by RanGTP. Interacts with ZBED1/hDREF; required for nuclear import of ZBED1/hDREF. Interacts with SRP19. Interacts with RPL23A (via BIB domain), RPS7 and RPL5. Post-translationally, mono-ADP-ribosylated by PARP16.

Its subcellular location is the cytoplasm. It is found in the nucleus envelope. Functionally, functions in nuclear protein import, either in association with an adapter protein, like an importin-alpha subunit, which binds to nuclear localization signals (NLS) in cargo substrates, or by acting as autonomous nuclear transport receptor. Acting autonomously, serves itself as NLS receptor. Docking of the importin/substrate complex to the nuclear pore complex (NPC) is mediated by KPNB1 through binding to nucleoporin FxFG repeats and the complex is subsequently translocated through the pore by an energy requiring, Ran-dependent mechanism. At the nucleoplasmic side of the NPC, Ran binds to importin-beta and the three components separate and importin-alpha and -beta are re-exported from the nucleus to the cytoplasm where GTP hydrolysis releases Ran from importin. The directionality of nuclear import is thought to be conferred by an asymmetric distribution of the GTP- and GDP-bound forms of Ran between the cytoplasm and nucleus. Mediates autonomously the nuclear import of ribosomal proteins RPL23A, RPS7 and RPL5. In association with IPO7, mediates the nuclear import of H1 histone. In vitro, mediates nuclear import of H2A, H2B, H3 and H4 histones. Imports MRTFA, SNAI1 and PRKCI into the nucleus. In Mus musculus (Mouse), this protein is Importin subunit beta-1 (Kpnb1).